Reading from the N-terminus, the 56-residue chain is Photosystem II reaction center protein K (56 aa).

Residues 1–19 (MFNIFLDDAFIHSNNPFFG) constitute a propeptide that is removed on maturation. The chain crosses the membrane as a helical span at residues 35–55 (MPIIPVLSFLLAFVWQAAVSF).

The protein belongs to the PsbK family. As to quaternary structure, PSII is composed of 1 copy each of membrane proteins PsbA, PsbB, PsbC, PsbD, PsbE, PsbF, PsbH, PsbI, PsbJ, PsbK, PsbL, PsbM, PsbT, PsbX, PsbY, PsbZ, Psb30/Ycf12, at least 3 peripheral proteins of the oxygen-evolving complex and a large number of cofactors. It forms dimeric complexes.

It is found in the plastid. It localises to the chloroplast thylakoid membrane. In terms of biological role, one of the components of the core complex of photosystem II (PSII). PSII is a light-driven water:plastoquinone oxidoreductase that uses light energy to abstract electrons from H(2)O, generating O(2) and a proton gradient subsequently used for ATP formation. It consists of a core antenna complex that captures photons, and an electron transfer chain that converts photonic excitation into a charge separation. The polypeptide is Photosystem II reaction center protein K (Pinus thunbergii (Japanese black pine)).